The following is a 546-amino-acid chain: Tyrosine-protein kinase yes (546 aa).

Basic and acidic residues predominate over residues Met1–Pro18. The tract at residues Met1–Gly58 is disordered. A lipid anchor (N-myristoyl glycine) is attached at Gly2. A lipid anchor (S-palmitoyl cysteine; in membrane form) is attached at Cys3. Residues Pro48–Gly58 show a composition bias toward polar residues. In terms of domain architecture, SH3 spans Gly94–Ser155. In terms of domain architecture, SH2 spans Trp161–Cys258. The 254-residue stretch at Leu280 to Phe533 folds into the Protein kinase domain. ATP contacts are provided by residues Leu286–Val294 and Lys308. The active-site Proton acceptor is the Asp399. Residue Tyr429 is modified to Phosphotyrosine; by autocatalysis. Residue Tyr540 is modified to Phosphotyrosine; by CSK.

This sequence belongs to the protein kinase superfamily. Tyr protein kinase family. SRC subfamily. Post-translationally, autophosphorylation at Tyr-429 maintains enzyme activity. In terms of processing, palmitoylation at Cys-3 promotes membrane localization. In terms of tissue distribution, widely expressed.

It localises to the cell membrane. The protein resides in the cytoplasm. Its subcellular location is the cytoskeleton. It is found in the microtubule organizing center. The protein localises to the centrosome. It localises to the cytosol. The protein resides in the cell junction. The enzyme catalyses L-tyrosyl-[protein] + ATP = O-phospho-L-tyrosyl-[protein] + ADP + H(+). In terms of biological role, non-receptor protein tyrosine kinase that is involved in the regulation of cell growth and survival, apoptosis, cell-cell adhesion, cytoskeleton remodeling, differentiation, G2/M progression and cytokinesis. Required for convergent extension cell movements during gastrulation, acting with fyna via rhoa. May be required for epiboly to occur, possibly through its effects in calcium signaling. During embryonic development, phosphorylates ptk2.1/fak. The chain is Tyrosine-protein kinase yes (yes1) from Danio rerio (Zebrafish).